The primary structure comprises 223 residues: Gastrula zinc finger protein XlCGF52.1 (223 aa).

8 C2H2-type zinc fingers span residues 6 to 27 (FTCP…TEDH), 33 to 55 (FTCM…QRVH), 61 to 83 (YTCT…ISTH), 89 to 111 (FPCT…QRIH), 117 to 139 (FQCL…QRSH), 145 to 167 (YACS…ERIH), 173 to 195 (YECN…QKIH), and 201 to 223 (FTCT…QKIH).

This sequence belongs to the krueppel C2H2-type zinc-finger protein family.

Its subcellular location is the nucleus. In terms of biological role, may be involved in transcriptional regulation. The sequence is that of Gastrula zinc finger protein XlCGF52.1 from Xenopus laevis (African clawed frog).